A 483-amino-acid chain; its full sequence is Iroquois-class homeodomain protein IRX-5 (483 aa).

The homeobox; TALE-type DNA-binding region spans 113–175 (DPAYRKNATR…NARRRLKKEN (63 aa)). 2 disordered regions span residues 177–392 (MTWT…QCPF) and 423–442 (GHPG…FNGL). Residues 186-203 (EDEEEEENIDLEKNDEDE) show a composition bias toward acidic residues. Basic and acidic residues-rich tracts occupy residues 204–213 (PQKPEDKGDP) and 250–261 (SDFKEPPSEGRL). 2 stretches are compositionally biased toward low complexity: residues 266–282 (GPPR…AAAR) and 374–388 (SRAS…SPSA). The residue at position 274 (Ser274) is a Phosphoserine. Ser464 is modified (phosphoserine).

The protein belongs to the TALE/IRO homeobox family.

The protein localises to the nucleus. Functionally, establishes the cardiac repolarization gradient by its repressive actions on the KCND2 potassium-channel gene. Required for retinal cone bipolar cell differentiation. May regulate contrast adaptation in the retina and control specific aspects of visual function in circuits of the mammalian retina. Could be involved in the regulation of both the cell cycle and apoptosis in prostate cancer cells. Involved in craniofacial and gonadal development. Modulates the migration of progenitor cell populations in branchial arches and gonads by repressing CXCL12. The sequence is that of Iroquois-class homeodomain protein IRX-5 (IRX5) from Homo sapiens (Human).